The primary structure comprises 130 residues: Large-conductance mechanosensitive channel (130 aa).

2 consecutive transmembrane segments (helical) span residues 14–34 (IIDL…VTSF) and 73–93 (FVDF…LVKF).

The protein belongs to the MscL family. Homopentamer.

Its subcellular location is the cell membrane. Its function is as follows. Channel that opens in response to stretch forces in the membrane lipid bilayer. May participate in the regulation of osmotic pressure changes within the cell. The protein is Large-conductance mechanosensitive channel of Oceanobacillus iheyensis (strain DSM 14371 / CIP 107618 / JCM 11309 / KCTC 3954 / HTE831).